Here is a 143-residue protein sequence, read N- to C-terminus: Anti-sigma F factor (143 aa).

This sequence belongs to the anti-sigma-factor family.

The enzyme catalyses L-seryl-[protein] + ATP = O-phospho-L-seryl-[protein] + ADP + H(+). It carries out the reaction L-threonyl-[protein] + ATP = O-phospho-L-threonyl-[protein] + ADP + H(+). Functionally, binds to sigma F and blocks its ability to form an RNA polymerase holoenzyme (E-sigma F). Phosphorylates SpoIIAA on a serine residue. This phosphorylation may enable SpoIIAA to act as an anti-anti-sigma factor that counteracts SpoIIAB and thus releases sigma F from inhibition. This chain is Anti-sigma F factor, found in Clostridium beijerinckii (strain ATCC 51743 / NCIMB 8052) (Clostridium acetobutylicum).